A 149-amino-acid polypeptide reads, in one-letter code: MADQLTEEQIAEFKEAFSLFDKDGDGTITTKELGTVMRSLGQNPTEAELQDMINEVDSDGNGTIDFPEFLSLMARKMKDTDTEEELIEAFKVFDRDGNGFISAAELRHVMTNLGEKLTDEEVDEMIREADVDGDGQINYEEFVKMMMAK.

The residue at position 2 (A2) is an N-acetylalanine. 4 consecutive EF-hand domains span residues 8-43, 44-79, 81-116, and 117-149; these read EQIA…LGQN, PTEA…KMKD, DTEE…LGEK, and LTDE…MMAK. Ca(2+) is bound by residues D21, D23, D25, T27, E32, D57, D59, N61, T63, E68, D94, D96, N98, and E105. K116 is subject to N6,N6,N6-trimethyllysine. Residues D130, D132, D134, Q136, and E141 each contribute to the Ca(2+) site.

The protein belongs to the calmodulin family.

Its function is as follows. Calmodulin mediates the control of a large number of enzymes, ion channels and other proteins by Ca(2+). Among the enzymes to be stimulated by the calmodulin-Ca(2+) complex are a number of protein kinases and phosphatases. The polypeptide is Calmodulin (Heterocapsa triquetra (Dinoflagellate)).